Consider the following 482-residue polypeptide: Anthocyanin 3'-O-beta-glucosyltransferase (482 aa).

His-16 serves as the catalytic Proton acceptor. Position 16 (His-16) interacts with an anthocyanidin. Asp-119 functions as the Charge relay in the catalytic mechanism. 7 residues coordinate UDP-alpha-D-glucose: Ala-349, Gln-351, His-366, Trp-369, Asn-370, Ser-371, and Glu-374. Residue Ala-389 coordinates an anthocyanidin. The UDP-alpha-D-glucose site is built by Glu-390 and Gln-391.

The protein belongs to the UDP-glycosyltransferase family. In terms of processing, the N-terminus is blocked. Abundant in petals and barely detected in leaves.

It carries out the reaction delphinidin 3,5-bis-O-beta-D-glucoside + UDP-alpha-D-glucose = delphinidin 3,3',5-tri-O-beta-D-glucoside + UDP + H(+). Functionally, specifically glucosylates the 3'-hydroxy group of delphinidin 3,5-di-O-glucoside to produce gentiodelphin. Shows a strict specificity for UDP-glucose as donor. In Gentiana triflora (Clustered gentian), this protein is Anthocyanin 3'-O-beta-glucosyltransferase.